Consider the following 244-residue polypeptide: Demethylmenaquinone methyltransferase (244 aa).

S-adenosyl-L-methionine is bound by residues T65, D86, and 114 to 115 (DA).

It belongs to the class I-like SAM-binding methyltransferase superfamily. MenG/UbiE family.

It catalyses the reaction a 2-demethylmenaquinol + S-adenosyl-L-methionine = a menaquinol + S-adenosyl-L-homocysteine + H(+). Its pathway is quinol/quinone metabolism; menaquinone biosynthesis; menaquinol from 1,4-dihydroxy-2-naphthoate: step 2/2. Methyltransferase required for the conversion of demethylmenaquinol (DMKH2) to menaquinol (MKH2). The polypeptide is Demethylmenaquinone methyltransferase (Lactobacillus johnsonii (strain CNCM I-12250 / La1 / NCC 533)).